A 213-amino-acid polypeptide reads, in one-letter code: Glutamine amidotransferase-like class 1 domain-containing protein 1 (213 aa).

Residues 1–20 form the signal peptide; sequence MTSKPTCLIVASAASAGVSA.

Belongs to the peptidase C56 family. In terms of assembly, homotetramer. Component of the FERRY complex.

The protein localises to the secreted. It localises to the early endosome. Functionally, component of the FERRY complex (Five-subunit Endosomal Rab5 and RNA/ribosome intermediary). The FERRY complex directly interacts with mRNAs and RAB5A, and functions as a RAB5A effector involved in the localization and the distribution of specific mRNAs most likely by mediating their endosomal transport. The complex recruits mRNAs and ribosomes to early endosomes through direct mRNA-interaction. The protein is Glutamine amidotransferase-like class 1 domain-containing protein 1 of Danio rerio (Zebrafish).